The primary structure comprises 318 residues: Porphobilinogen deaminase (318 aa).

An S-(dipyrrolylmethanemethyl)cysteine modification is found at Cys-241.

Belongs to the HMBS family. In terms of assembly, monomer. Dipyrromethane is required as a cofactor.

It catalyses the reaction 4 porphobilinogen + H2O = hydroxymethylbilane + 4 NH4(+). The protein operates within porphyrin-containing compound metabolism; protoporphyrin-IX biosynthesis; coproporphyrinogen-III from 5-aminolevulinate: step 2/4. Its function is as follows. Tetrapolymerization of the monopyrrole PBG into the hydroxymethylbilane pre-uroporphyrinogen in several discrete steps. This Geotalea uraniireducens (strain Rf4) (Geobacter uraniireducens) protein is Porphobilinogen deaminase.